The primary structure comprises 312 residues: Malate dehydrogenase (312 aa).

NAD(+) is bound by residues 7–13 (GAAGGIG) and Asp-34. Arg-81 and Arg-87 together coordinate substrate. NAD(+)-binding positions include Asn-94 and 117–119 (ITN). Substrate-binding residues include Asn-119 and Arg-153. His-177 acts as the Proton acceptor in catalysis. Position 227 (Met-227) interacts with NAD(+).

The protein belongs to the LDH/MDH superfamily. MDH type 1 family. Homodimer.

It carries out the reaction (S)-malate + NAD(+) = oxaloacetate + NADH + H(+). Functionally, catalyzes the reversible oxidation of malate to oxaloacetate. The sequence is that of Malate dehydrogenase from Escherichia coli O6:K15:H31 (strain 536 / UPEC).